We begin with the raw amino-acid sequence, 1182 residues long: DNA-directed RNA polymerase subunit beta (1182 aa).

The protein belongs to the RNA polymerase beta chain family. As to quaternary structure, the RNAP catalytic core consists of 2 alpha, 1 beta, 1 beta' and 1 omega subunit. When a sigma factor is associated with the core the holoenzyme is formed, which can initiate transcription.

It carries out the reaction RNA(n) + a ribonucleoside 5'-triphosphate = RNA(n+1) + diphosphate. DNA-dependent RNA polymerase catalyzes the transcription of DNA into RNA using the four ribonucleoside triphosphates as substrates. The sequence is that of DNA-directed RNA polymerase subunit beta from Fervidobacterium nodosum (strain ATCC 35602 / DSM 5306 / Rt17-B1).